Reading from the N-terminus, the 207-residue chain is Glycerol-3-phosphate acyltransferase (207 aa).

The next 5 membrane-spanning stretches (helical) occupy residues 2–22 (ILVL…GVVI), 47–67 (MLGP…GTLA), 72–92 (ILFG…AVFG), 121–141 (FFVI…MVSV), and 155–175 (LVYH…VFLI).

The protein belongs to the PlsY family. In terms of assembly, probably interacts with PlsX.

It localises to the cell membrane. It catalyses the reaction an acyl phosphate + sn-glycerol 3-phosphate = a 1-acyl-sn-glycero-3-phosphate + phosphate. Its pathway is lipid metabolism; phospholipid metabolism. In terms of biological role, catalyzes the transfer of an acyl group from acyl-phosphate (acyl-PO(4)) to glycerol-3-phosphate (G3P) to form lysophosphatidic acid (LPA). This enzyme utilizes acyl-phosphate as fatty acyl donor, but not acyl-CoA or acyl-ACP. The sequence is that of Glycerol-3-phosphate acyltransferase from Lacticaseibacillus casei (strain BL23) (Lactobacillus casei).